The sequence spans 501 residues: G protein-activated inward rectifier potassium channel 1 (501 aa).

Positions 1-40 are disordered; sequence MSALRRKFGDDYQVVTTSSSGSGLQPQGPGQGPQQQLVPK. The Cytoplasmic portion of the chain corresponds to 1–80; it reads MSALRRKFGD…LFTTLVDLKW (80 aa). A compositionally biased stretch (low complexity) spans 18–37; the sequence is SSSGSGLQPQGPGQGPQQQL. The helical transmembrane segment at 81 to 105 threads the bilayer; that stretch reads RWNLFIFILTYTVAWLFMASMWWVI. Residues 106–129 are Extracellular-facing; it reads AYTRGDLNKAHVGNYTPCVANVYN. Asn-119 carries N-linked (GlcNAc...) asparagine glycosylation. Residues 130 to 141 constitute an intramembrane region (helical; Pore-forming); sequence FPSAFLFFIETE. An intramembrane region (pore-forming) is located at residues 142–148; it reads ATIGYGY. The Selectivity filter signature appears at 143 to 148; the sequence is TIGYGY. The Extracellular portion of the chain corresponds to 149-157; the sequence is RYITDKCPE. A helical membrane pass occupies residues 158-179; the sequence is GIILFLFQSILGSIVDAFLIGC. Residues 180 to 501 are Cytoplasmic-facing; that stretch reads MFIKMSQPKK…LRKMNSDRFT (322 aa). The segment at 182–209 is polyphosphoinositide (PIP2)-binding; it reads IKMSQPKKRAETLMFSEHAVISMRDGKL. Ser-385 and Ser-424 each carry phosphoserine. The span at 456–467 shows a compositional bias: polar residues; that stretch reads TKMLSDPMSQSV. A disordered region spans residues 456–501; sequence TKMLSDPMSQSVADLPPKLQKMAGGPTRMEGNLPAKLRKMNSDRFT.

Belongs to the inward rectifier-type potassium channel (TC 1.A.2.1) family. KCNJ3 subfamily. Associates with KCNJ5/GIRK4 or KCNJ6/GIRK2 to form a G-protein activated heteromultimer pore-forming unit. The resulting inward current is much larger. Associates with KCNJ9/GIRK3 to form a G-protein activated heteromultimer pore-forming unit.

Its subcellular location is the membrane. It carries out the reaction K(+)(in) = K(+)(out). With respect to regulation, heteromultimer composed of KCNJ3/GIRK1 and KCNJ5/GIRK4 is activated by phosphatidylinositol 4,5 biphosphate (PtdIns(4,5)P2). Functionally, inward rectifier potassium channels are characterized by a greater tendency to allow potassium to flow into the cell rather than out of it. Their voltage dependence is regulated by the concentration of extracellular potassium; as external potassium is raised, the voltage range of the channel opening shifts to more positive voltages. The inward rectification is mainly due to the blockage of outward current by internal magnesium. This potassium channel is controlled by G proteins. This receptor plays a crucial role in regulating the heartbeat. Forms a functional channel in association with KCNJ9/GIRK3. This Rattus norvegicus (Rat) protein is G protein-activated inward rectifier potassium channel 1 (Kcnj3).